We begin with the raw amino-acid sequence, 156 residues long: ATP synthase subunit b (156 aa).

Residues 7–27 traverse the membrane as a helical segment; that stretch reads LIAQFVVFFILAGFTMKFVWP.

Belongs to the ATPase B chain family. As to quaternary structure, F-type ATPases have 2 components, F(1) - the catalytic core - and F(0) - the membrane proton channel. F(1) has five subunits: alpha(3), beta(3), gamma(1), delta(1), epsilon(1). F(0) has three main subunits: a(1), b(2) and c(10-14). The alpha and beta chains form an alternating ring which encloses part of the gamma chain. F(1) is attached to F(0) by a central stalk formed by the gamma and epsilon chains, while a peripheral stalk is formed by the delta and b chains.

It is found in the cell inner membrane. F(1)F(0) ATP synthase produces ATP from ADP in the presence of a proton or sodium gradient. F-type ATPases consist of two structural domains, F(1) containing the extramembraneous catalytic core and F(0) containing the membrane proton channel, linked together by a central stalk and a peripheral stalk. During catalysis, ATP synthesis in the catalytic domain of F(1) is coupled via a rotary mechanism of the central stalk subunits to proton translocation. In terms of biological role, component of the F(0) channel, it forms part of the peripheral stalk, linking F(1) to F(0). The sequence is that of ATP synthase subunit b from Herminiimonas arsenicoxydans.